A 364-amino-acid chain; its full sequence is Probable tartrate dehydrogenase/decarboxylase TtuC (364 aa).

Residues aspartate 222, aspartate 246, and aspartate 250 each contribute to the Mn(2+) site.

This sequence belongs to the isocitrate and isopropylmalate dehydrogenases family. Mg(2+) serves as cofactor. Mn(2+) is required as a cofactor. It depends on K(+) as a cofactor.

The protein resides in the cytoplasm. It carries out the reaction tartrate + NAD(+) = 2-hydroxy-3-oxosuccinate + NADH + H(+). The catalysed reaction is (2R,3S)-tartrate + NAD(+) = 2-hydroxy-3-oxosuccinate + NADH + H(+). The enzyme catalyses (2R,3R)-tartrate + NAD(+) = 2-hydroxy-3-oxosuccinate + NADH + H(+). It catalyses the reaction (2R,3R)-tartrate + H(+) = (R)-glycerate + CO2. It carries out the reaction (R)-malate + NAD(+) = pyruvate + CO2 + NADH. It participates in carbohydrate acid metabolism; tartrate degradation; 2-hydroxy-3-oxosuccinate from L-tartrate: step 1/1. It functions in the pathway carbohydrate acid metabolism; tartrate degradation; 2-hydroxy-3-oxosuccinate from meso-tartrate: step 1/1. The protein operates within carbohydrate acid metabolism; tartrate degradation; D-glycerate from L-tartrate: step 1/1. Functionally, has multiple catalytic activities. Apart from catalyzing the oxidation of (+)-tartrate to oxaloglycolate, also converts meso-tartrate to D-glycerate and catalyzes the oxidative decarboxylation of D-malate to pyruvate. The protein is Probable tartrate dehydrogenase/decarboxylase TtuC (ttuC) of Agrobacterium vitis (Rhizobium vitis).